Reading from the N-terminus, the 427-residue chain is 3-phosphoshikimate 1-carboxyvinyltransferase (427 aa).

The 3-phosphoshikimate site is built by lysine 20, serine 21, and arginine 25. Residue lysine 20 coordinates phosphoenolpyruvate. Residues glycine 92 and arginine 120 each coordinate phosphoenolpyruvate. 4 residues coordinate 3-phosphoshikimate: serine 166, glutamine 168, aspartate 312, and lysine 339. A phosphoenolpyruvate-binding site is contributed by glutamine 168. The active-site Proton acceptor is the aspartate 312. Phosphoenolpyruvate is bound by residues arginine 343 and arginine 385.

Belongs to the EPSP synthase family. Monomer.

It localises to the cytoplasm. The catalysed reaction is 3-phosphoshikimate + phosphoenolpyruvate = 5-O-(1-carboxyvinyl)-3-phosphoshikimate + phosphate. The protein operates within metabolic intermediate biosynthesis; chorismate biosynthesis; chorismate from D-erythrose 4-phosphate and phosphoenolpyruvate: step 6/7. Catalyzes the transfer of the enolpyruvyl moiety of phosphoenolpyruvate (PEP) to the 5-hydroxyl of shikimate-3-phosphate (S3P) to produce enolpyruvyl shikimate-3-phosphate and inorganic phosphate. The chain is 3-phosphoshikimate 1-carboxyvinyltransferase from Streptococcus mutans serotype c (strain ATCC 700610 / UA159).